A 459-amino-acid chain; its full sequence is Methionine aminopeptidase 2-2 (459 aa).

Residues 1–12 (MGSKSPEDHRQG) are compositionally biased toward basic and acidic residues. The tract at residues 1–87 (MGSKSPEDHR…KKLSVVQQTS (87 aa)) is disordered. Residues 43–54 (GQDEDGDDDDDE) show a composition bias toward acidic residues. Basic and acidic residues predominate over residues 55 to 66 (KTGIDLKTNDGA). Positions 67-79 (KKKRKRNKKKSKK) are enriched in basic residues. Residue histidine 210 participates in substrate binding. Residues aspartate 231, aspartate 242, and histidine 311 each contribute to the a divalent metal cation site. Histidine 319 is a binding site for substrate. Positions 344 and 440 each coordinate a divalent metal cation.

This sequence belongs to the peptidase M24A family. Methionine aminopeptidase eukaryotic type 2 subfamily. Co(2+) serves as cofactor. Zn(2+) is required as a cofactor. It depends on Mn(2+) as a cofactor. The cofactor is Fe(2+).

It localises to the cytoplasm. The enzyme catalyses Release of N-terminal amino acids, preferentially methionine, from peptides and arylamides.. Cotranslationally removes the N-terminal methionine from nascent proteins. The N-terminal methionine is often cleaved when the second residue in the primary sequence is small and uncharged (Met-Ala-, Cys, Gly, Pro, Ser, Thr, or Val). The polypeptide is Methionine aminopeptidase 2-2 (Pyrenophora teres f. teres (strain 0-1) (Barley net blotch fungus)).